The chain runs to 269 residues: Formamidopyrimidine-DNA glycosylase (269 aa).

The Schiff-base intermediate with DNA role is filled by proline 2. Glutamate 3 (proton donor) is an active-site residue. The active-site Proton donor; for beta-elimination activity is lysine 57. DNA-binding residues include histidine 90, arginine 109, and arginine 150. The segment at 235-269 (QVYGRKGEPCRVCGTPVVATKHAQRATFYCRHCQK) adopts an FPG-type zinc-finger fold. Arginine 259 acts as the Proton donor; for delta-elimination activity in catalysis.

Belongs to the FPG family. As to quaternary structure, monomer. The cofactor is Zn(2+).

It catalyses the reaction Hydrolysis of DNA containing ring-opened 7-methylguanine residues, releasing 2,6-diamino-4-hydroxy-5-(N-methyl)formamidopyrimidine.. It carries out the reaction 2'-deoxyribonucleotide-(2'-deoxyribose 5'-phosphate)-2'-deoxyribonucleotide-DNA = a 3'-end 2'-deoxyribonucleotide-(2,3-dehydro-2,3-deoxyribose 5'-phosphate)-DNA + a 5'-end 5'-phospho-2'-deoxyribonucleoside-DNA + H(+). In terms of biological role, involved in base excision repair of DNA damaged by oxidation or by mutagenic agents. Acts as a DNA glycosylase that recognizes and removes damaged bases. Has a preference for oxidized purines, such as 7,8-dihydro-8-oxoguanine (8-oxoG). Has AP (apurinic/apyrimidinic) lyase activity and introduces nicks in the DNA strand. Cleaves the DNA backbone by beta-delta elimination to generate a single-strand break at the site of the removed base with both 3'- and 5'-phosphates. In Salmonella arizonae (strain ATCC BAA-731 / CDC346-86 / RSK2980), this protein is Formamidopyrimidine-DNA glycosylase.